The primary structure comprises 92 residues: Exodeoxyribonuclease 7 small subunit (92 aa).

Over residues alanine 71–aspartate 84 the composition is skewed to low complexity. The interval alanine 71–alanine 92 is disordered.

It belongs to the XseB family. As to quaternary structure, heterooligomer composed of large and small subunits.

The protein resides in the cytoplasm. The enzyme catalyses Exonucleolytic cleavage in either 5'- to 3'- or 3'- to 5'-direction to yield nucleoside 5'-phosphates.. Bidirectionally degrades single-stranded DNA into large acid-insoluble oligonucleotides, which are then degraded further into small acid-soluble oligonucleotides. In Leifsonia xyli subsp. xyli (strain CTCB07), this protein is Exodeoxyribonuclease 7 small subunit.